We begin with the raw amino-acid sequence, 353 residues long: MTEPLKPRIDFDGPLEVDQNPKFRAQQTFDENQAQNFAPATLDEAPEEEGQVEAVMDAALRPKRSLWRKMVMGGLALFGASVVGQGVQWTMNAWQTQDWVALGGCAAGALIIGAGVGSVVTEWQCLWCLRQRAHERDEARDLLHSHGTGKGRAFCEKLAQQAGIDQSHPALQRWYASIHETQNDREVVSLYAHLVQPVLDAQARREISRSAAESTLMIAVSPLALVDMAFIAWRNLRLINRIATLYGIELGYYSRLRLFKLVLLNIAFAGASELVREVGMDWMSQDLAARLSTRAAQGIGAGLLTARLGIKAMELCRPLPWIDDDKPRLGDFRRQLIGQVKETLQKGKTPSEK.

The next 3 membrane-spanning stretches (helical) occupy residues Met70–Thr90, Val100–Val120, and Glu213–Trp233.

This sequence belongs to the UPF0283 family.

Its subcellular location is the cell inner membrane. The polypeptide is UPF0283 membrane protein YcjF (Shigella sonnei (strain Ss046)).